Consider the following 439-residue polypeptide: Trigger factor (439 aa).

The PPIase FKBP-type domain maps to 170–255; it reads GDTVVIDFDG…IHELKKLETP (86 aa).

It belongs to the FKBP-type PPIase family. Tig subfamily.

Its subcellular location is the cytoplasm. The catalysed reaction is [protein]-peptidylproline (omega=180) = [protein]-peptidylproline (omega=0). Involved in protein export. Acts as a chaperone by maintaining the newly synthesized protein in an open conformation. Functions as a peptidyl-prolyl cis-trans isomerase. The chain is Trigger factor from Oenococcus oeni (strain ATCC BAA-331 / PSU-1).